An 878-amino-acid polypeptide reads, in one-letter code: Alanine--tRNA ligase (878 aa).

Zn(2+)-binding residues include His566, His570, Cys668, and His672. The segment at 846-866 (GGGRPDMAQAGGKQPEKLEEA) is disordered.

Belongs to the class-II aminoacyl-tRNA synthetase family. It depends on Zn(2+) as a cofactor.

The protein resides in the cytoplasm. The enzyme catalyses tRNA(Ala) + L-alanine + ATP = L-alanyl-tRNA(Ala) + AMP + diphosphate. Catalyzes the attachment of alanine to tRNA(Ala) in a two-step reaction: alanine is first activated by ATP to form Ala-AMP and then transferred to the acceptor end of tRNA(Ala). Also edits incorrectly charged Ser-tRNA(Ala) and Gly-tRNA(Ala) via its editing domain. In Bacillus pumilus (strain SAFR-032), this protein is Alanine--tRNA ligase.